Here is a 199-residue protein sequence, read N- to C-terminus: Peroxynitrite isomerase (199 aa).

The short motif at 21–27 is the GXWXGXG element; it reads GEWEGRG. His-190 lines the heme b pocket.

The protein belongs to the nitrobindin family. As to quaternary structure, homodimer. The cofactor is heme b.

It catalyses the reaction peroxynitrite = nitrate. Its pathway is nitrogen metabolism. Heme-binding protein able to scavenge peroxynitrite and to protect free L-tyrosine against peroxynitrite-mediated nitration, by acting as a peroxynitrite isomerase that converts peroxynitrite to nitrate. Therefore, this protein likely plays a role in peroxynitrite sensing and in the detoxification of reactive nitrogen and oxygen species (RNS and ROS, respectively). Is able to bind nitric oxide (NO) in vitro, but may act as a sensor of peroxynitrite levels in vivo. In Paenarthrobacter aurescens (strain TC1), this protein is Peroxynitrite isomerase.